Consider the following 761-residue polypeptide: Phosphoribosylformylglycinamidine synthase subunit PurL (761 aa).

H58 is a catalytic residue. ATP-binding residues include Y61 and K105. Mg(2+) is bound at residue E107. Residues 108 to 111 and R130 contribute to the substrate site; that span reads SHNH. The active-site Proton acceptor is H109. Residue D131 participates in Mg(2+) binding. Q259 contacts substrate. D287 lines the Mg(2+) pocket. 331–333 serves as a coordination point for substrate; it reads ESQ. Residues N519 and G556 each coordinate ATP. Mg(2+) is bound at residue N557. Residue S559 coordinates substrate.

Belongs to the FGAMS family. In terms of assembly, monomer. Part of the FGAM synthase complex composed of 1 PurL, 1 PurQ and 2 PurS subunits.

It is found in the cytoplasm. It catalyses the reaction N(2)-formyl-N(1)-(5-phospho-beta-D-ribosyl)glycinamide + L-glutamine + ATP + H2O = 2-formamido-N(1)-(5-O-phospho-beta-D-ribosyl)acetamidine + L-glutamate + ADP + phosphate + H(+). It functions in the pathway purine metabolism; IMP biosynthesis via de novo pathway; 5-amino-1-(5-phospho-D-ribosyl)imidazole from N(2)-formyl-N(1)-(5-phospho-D-ribosyl)glycinamide: step 1/2. Functionally, part of the phosphoribosylformylglycinamidine synthase complex involved in the purines biosynthetic pathway. Catalyzes the ATP-dependent conversion of formylglycinamide ribonucleotide (FGAR) and glutamine to yield formylglycinamidine ribonucleotide (FGAM) and glutamate. The FGAM synthase complex is composed of three subunits. PurQ produces an ammonia molecule by converting glutamine to glutamate. PurL transfers the ammonia molecule to FGAR to form FGAM in an ATP-dependent manner. PurS interacts with PurQ and PurL and is thought to assist in the transfer of the ammonia molecule from PurQ to PurL. The sequence is that of Phosphoribosylformylglycinamidine synthase subunit PurL from Rhodococcus jostii (strain RHA1).